The chain runs to 40 residues: Metallothionein-1 (40 aa).

The protein belongs to the metallothionein superfamily. Type 5 family.

This protein binds cations of several transition elements. It is thought to be involved in detoxification processes. The protein is Metallothionein-1 (MtnA) of Drosophila ananassae (Fruit fly).